Reading from the N-terminus, the 314-residue chain is tRNA dimethylallyltransferase (314 aa).

12-19 serves as a coordination point for ATP; that stretch reads GPTAAGKS. 14–19 contacts substrate; that stretch reads TAAGKS. Interaction with substrate tRNA regions lie at residues 37 to 40, 161 to 165, and 245 to 250; these read DSAT, QRIQR, and RCVGYR.

Belongs to the IPP transferase family. As to quaternary structure, monomer. It depends on Mg(2+) as a cofactor.

The catalysed reaction is adenosine(37) in tRNA + dimethylallyl diphosphate = N(6)-dimethylallyladenosine(37) in tRNA + diphosphate. Catalyzes the transfer of a dimethylallyl group onto the adenine at position 37 in tRNAs that read codons beginning with uridine, leading to the formation of N6-(dimethylallyl)adenosine (i(6)A). The sequence is that of tRNA dimethylallyltransferase from Bordetella petrii (strain ATCC BAA-461 / DSM 12804 / CCUG 43448).